The following is an 80-amino-acid chain: U4-theraphotoxin-Spl1a (80 aa).

Residues methionine 1–alanine 21 form the signal peptide. Residues glutamate 22–arginine 50 constitute a propeptide that is removed on maturation. 3 disulfide bridges follow: cysteine 52/cysteine 66, cysteine 59/cysteine 71, and cysteine 65/cysteine 75. Leucine 79 carries the leucine amide modification.

It belongs to the neurotoxin 30 (phrixotoxin) family. In terms of tissue distribution, expressed by the venom gland.

It is found in the secreted. In terms of biological role, probable ion channel inhibitor. Shows insecticidal activity when injected into mealworms. This is U4-theraphotoxin-Spl1a from Selenotypus plumipes (Australian featherleg tarantula).